We begin with the raw amino-acid sequence, 453 residues long: Adenosylmethionine-8-amino-7-oxononanoate aminotransferase (453 aa).

118–119 (GA) is a binding site for pyridoxal 5'-phosphate. A substrate-binding site is contributed by Tyr-151. Asp-257 serves as a coordination point for pyridoxal 5'-phosphate. The substrate site is built by Lys-286, Gly-321, and Arg-416. Lys-286 bears the N6-(pyridoxal phosphate)lysine mark.

This sequence belongs to the class-III pyridoxal-phosphate-dependent aminotransferase family. BioA subfamily. As to quaternary structure, homodimer. Pyridoxal 5'-phosphate is required as a cofactor.

It is found in the cytoplasm. It carries out the reaction (8S)-8-amino-7-oxononanoate + S-adenosyl-L-methionine = S-adenosyl-4-methylsulfanyl-2-oxobutanoate + (7R,8S)-7,8-diammoniononanoate. It participates in cofactor biosynthesis; biotin biosynthesis; 7,8-diaminononanoate from 8-amino-7-oxononanoate (SAM route): step 1/1. Its function is as follows. Catalyzes the transfer of the alpha-amino group from S-adenosyl-L-methionine (SAM) to 7-keto-8-aminopelargonic acid (KAPA) to form 7,8-diaminopelargonic acid (DAPA). It is the only aminotransferase known to utilize SAM as an amino donor. This chain is Adenosylmethionine-8-amino-7-oxononanoate aminotransferase, found in Aquifex aeolicus (strain VF5).